Reading from the N-terminus, the 432-residue chain is Eukaryotic translation initiation factor 3 subunit E (432 aa).

Residues 221–401 enclose the PCI domain; it reads VYYNYPKGRD…MGVKSVSIHE (181 aa).

It belongs to the eIF-3 subunit E family. In terms of assembly, component of the eukaryotic translation initiation factor 3 (eIF-3) complex.

It localises to the cytoplasm. Its function is as follows. Component of the eukaryotic translation initiation factor 3 (eIF-3) complex, which is involved in protein synthesis of a specialized repertoire of mRNAs and, together with other initiation factors, stimulates binding of mRNA and methionyl-tRNAi to the 40S ribosome. The eIF-3 complex specifically targets and initiates translation of a subset of mRNAs involved in cell proliferation. The polypeptide is Eukaryotic translation initiation factor 3 subunit E (Caenorhabditis elegans).